The sequence spans 160 residues: ATP synthase subunit b, chloroplastic (160 aa).

Residues 12–31 (NVINIAILVVILIRFARQVV) traverse the membrane as a helical segment.

The protein belongs to the ATPase B chain family. As to quaternary structure, F-type ATPases have 2 components, F(1) - the catalytic core - and F(0) - the membrane proton channel. F(1) has five subunits: alpha(3), beta(3), gamma(1), delta(1), epsilon(1). F(0) has four main subunits: a(1), b(1), b'(1) and c(10-14). The alpha and beta chains form an alternating ring which encloses part of the gamma chain. F(1) is attached to F(0) by a central stalk formed by the gamma and epsilon chains, while a peripheral stalk is formed by the delta, b and b' chains.

The protein resides in the plastid. It localises to the chloroplast thylakoid membrane. In terms of biological role, f(1)F(0) ATP synthase produces ATP from ADP in the presence of a proton or sodium gradient. F-type ATPases consist of two structural domains, F(1) containing the extramembraneous catalytic core and F(0) containing the membrane proton channel, linked together by a central stalk and a peripheral stalk. During catalysis, ATP synthesis in the catalytic domain of F(1) is coupled via a rotary mechanism of the central stalk subunits to proton translocation. Functionally, component of the F(0) channel, it forms part of the peripheral stalk, linking F(1) to F(0). In Cyanidioschyzon merolae (strain NIES-3377 / 10D) (Unicellular red alga), this protein is ATP synthase subunit b, chloroplastic.